The following is a 502-amino-acid chain: Probable cytosol aminopeptidase (502 aa).

2 residues coordinate Mn(2+): Lys-269 and Asp-274. The active site involves Lys-281. 3 residues coordinate Mn(2+): Asp-292, Asp-351, and Glu-353. Arg-355 is an active-site residue.

The protein belongs to the peptidase M17 family. Mn(2+) is required as a cofactor.

It is found in the cytoplasm. It catalyses the reaction Release of an N-terminal amino acid, Xaa-|-Yaa-, in which Xaa is preferably Leu, but may be other amino acids including Pro although not Arg or Lys, and Yaa may be Pro. Amino acid amides and methyl esters are also readily hydrolyzed, but rates on arylamides are exceedingly low.. It carries out the reaction Release of an N-terminal amino acid, preferentially leucine, but not glutamic or aspartic acids.. Presumably involved in the processing and regular turnover of intracellular proteins. Catalyzes the removal of unsubstituted N-terminal amino acids from various peptides. The polypeptide is Probable cytosol aminopeptidase (Shewanella loihica (strain ATCC BAA-1088 / PV-4)).